A 282-amino-acid chain; its full sequence is tRNA N(3)-cytidine methyltransferase METTL6 (282 aa).

Residues Trp45, Tyr49, Gly87, Asp110, Asp136, Leu137, and Ile157 each coordinate S-adenosyl-L-methionine.

This sequence belongs to the methyltransferase superfamily. METL family. In terms of assembly, monomer. Interacts with SARS1/SerRS; interaction is mediated via tRNA(Ser) and is required for N(3)-methylcytidine methylation.

The protein resides in the cytoplasm. It localises to the nucleus. It carries out the reaction cytidine(32) in tRNA(Ser) + S-adenosyl-L-methionine = N(3)-methylcytidine(32) in tRNA(Ser) + S-adenosyl-L-homocysteine + H(+). Functionally, S-adenosyl-L-methionine-dependent methyltransferase that mediates N(3)-methylcytidine modification of residue 32 of the tRNA anticodon loop of tRNA(Ser), including tRNA(Ser)(UGA) and tRNA(Ser)(GCU). Interaction with SARS1/SerRS is required for N(3)-methylcytidine methylation. In Mus musculus (Mouse), this protein is tRNA N(3)-cytidine methyltransferase METTL6.